The primary structure comprises 153 residues: Ubiquitin-conjugating enzyme E2 13 (153 aa).

The UBC core domain occupies 3 to 149 (SLPKRIIKET…AREWTKLYAK (147 aa)). Residue cysteine 87 is the Glycyl thioester intermediate of the active site. Residue lysine 92 forms a Glycyl lysine isopeptide (Lys-Gly) (interchain with G-Cter in ubiquitin) linkage.

Belongs to the ubiquitin-conjugating enzyme family. In terms of assembly, heterodimer with MMS2.

It carries out the reaction S-ubiquitinyl-[E1 ubiquitin-activating enzyme]-L-cysteine + [E2 ubiquitin-conjugating enzyme]-L-cysteine = [E1 ubiquitin-activating enzyme]-L-cysteine + S-ubiquitinyl-[E2 ubiquitin-conjugating enzyme]-L-cysteine.. Its pathway is protein modification; protein ubiquitination. Functionally, has a role in the DNA error-free postreplication repair (PRR) pathway. The UBC13/MMS2 heterodimer catalyzes the synthesis of non-canonical poly-ubiquitin chains that are linked through 'Lys-63'. The protein is Ubiquitin-conjugating enzyme E2 13 (UBC13) of Saccharomyces cerevisiae (strain ATCC 204508 / S288c) (Baker's yeast).